We begin with the raw amino-acid sequence, 433 residues long: N-lysine methyltransferase SMYD2 (433 aa).

In terms of domain architecture, SET spans 7-241 (GGLERFCSPG…PGEEVFTSYI (235 aa)). 17-19 (KGR) provides a ligand contact to S-adenosyl-L-methionine. Zn(2+) is bound by residues Cys52, Cys55, Cys65, Cys68, Cys74, Cys78, His86, and Cys90. An MYND-type zinc finger spans residues 52–90 (CEFCFARKEGLSKCGRCKQAFYCNVECQREDWPMHKLEC). S-adenosyl-L-methionine is bound by residues His137, 206 to 207 (NH), and 258 to 260 (YFF).

Belongs to the class V-like SAM-binding methyltransferase superfamily. In terms of assembly, interacts with RNA polymerase II and HELZ. Interacts with SIN3A and HDAC1. Interacts (via MYND-type zinc finger) with EPB41L3. Interacts (via SET domain) with p53/TP53. Interacts with RB1 and HSP90AA1.

The protein localises to the cytoplasm. The protein resides in the cytosol. It is found in the nucleus. The catalysed reaction is L-lysyl(4)-[histone H3] + 3 S-adenosyl-L-methionine = N(6),N(6),N(6)-trimethyl-L-lysyl(4)-[histone H3] + 3 S-adenosyl-L-homocysteine + 3 H(+). It carries out the reaction L-lysyl-[protein] + S-adenosyl-L-methionine = N(6)-methyl-L-lysyl-[protein] + S-adenosyl-L-homocysteine + H(+). Its function is as follows. Protein-lysine N-methyltransferase that methylates both histones and non-histone proteins, including p53/TP53 and RB1. Specifically trimethylates histone H3 'Lys-4' (H3K4me3) in vivo. The activity requires interaction with HSP90alpha. Shows even higher methyltransferase activity on p53/TP53. Monomethylates 'Lys-370' of p53/TP53, leading to decreased DNA-binding activity and subsequent transcriptional regulation activity of p53/TP53. Monomethylates RB1 at 'Lys-860'. The chain is N-lysine methyltransferase SMYD2 (SMYD2) from Bos taurus (Bovine).